A 462-amino-acid chain; its full sequence is A-type ATP synthase subunit B (462 aa).

This sequence belongs to the ATPase alpha/beta chains family. Has multiple subunits with at least A(3), B(3), C, D, E, F, H, I and proteolipid K(x).

It localises to the cell membrane. Component of the A-type ATP synthase that produces ATP from ADP in the presence of a proton gradient across the membrane. The B chain is a regulatory subunit. The protein is A-type ATP synthase subunit B of Methanococcus maripaludis (strain DSM 14266 / JCM 13030 / NBRC 101832 / S2 / LL).